The following is a 1624-amino-acid chain: Pappalysin-1 (1624 aa).

The N-terminal stretch at 1–22 is a signal peptide; the sequence is MRLWSWVLRLGLLSAALGCGLA. Residues 23–81 constitute a propeptide that is removed on maturation; it reads ERPRRVRRDPRAVRPPRPAAGPATCATRAARGRRASPPPPPGGAWEAVRVPRRRQQRAA. The interval 28–93 is disordered; that stretch reads VRRDPRAVRP…AEEPSPPSRA (66 aa). Residues 42 to 51 show a composition bias toward low complexity; that stretch reads AGPATCATRA. Intrachain disulfides connect Cys141–Cys232, Cys324–Cys619, Cys329–Cys654, Cys411–Cys425, Cys421–Cys437, Cys454–Cys470, Cys471–Cys482, Cys580–Cys597, Cys584–Cys609, Cys707–Cys875, Cys710–Cys878, Cys750–Cys832, Cys772–Cys778, Cys944–Cys972, Cys957–Cys968, Cys980–Cys987, and Cys996–Cys1008. A metalloprotease region spans residues 272 to 583; sequence RGLHTPLPQL…ISEIQSCSDP (312 aa). 2 N-linked (GlcNAc...) asparagine glycosylation sites follow: Asn387 and Asn398. N-linked (GlcNAc...) asparagine glycosylation is present at Asn426. A glycan (N-linked (GlcNAc...) asparagine) is linked at Asn516. Position 559 (His559) interacts with Zn(2+). The active site involves Glu560. Zn(2+) is bound by residues His563 and His569. Residues Asn598, Asn616, and Asn722 are each glycosylated (N-linked (GlcNAc...) asparagine). The N-linked (GlcNAc...) asparagine glycan is linked to Asn822. A glycan (N-linked (GlcNAc...) asparagine) is linked at Asn1023. Disulfide bonds link Cys1033–Cys1067, Cys1048–Cys1136, Cys1189–Cys1202, Cys1212–Cys1266, Cys1224–Cys1235, Cys1239–Cys1277, Cys1282–Cys1326, Cys1297–Cys1307, Cys1311–Cys1339, Cys1343–Cys1396, Cys1359–Cys1370, Cys1374–Cys1407, Cys1412–Cys1455, Cys1425–Cys1435, Cys1439–Cys1468, Cys1475–Cys1536, Cys1489–Cys1499, Cys1503–Cys1551, and Cys1555–Cys1573. Sushi domains follow at residues 1210-1279, 1280-1341, 1342-1409, 1410-1470, and 1473-1553; these read ADCP…ACEP, VDCG…LCEL, MCLA…TCVP, VTCD…VCRE, and GQCS…HCVK. Asn1219 and Asn1223 each carry an N-linked (GlcNAc...) asparagine glycan. N-linked (GlcNAc...) asparagine glycosylation is present at Asn1320. A glycan (N-linked (GlcNAc...) asparagine) is linked at Asn1516.

This sequence belongs to the peptidase M43B family. Homodimer; disulfide-linked. In pregnancy serum, predominantly found as a disulfide-linked 2:2 heterotetramer with the proform of PRG2. The cofactor is Zn(2+). Detected in kidney, spleen, brain, ovary, breast, skin, prostate, uterus, and placenta.

The protein localises to the secreted. It carries out the reaction Cleavage of the 135-Met-|-Lys-136 bond in insulin-like growth factor binding protein (IGFBP)-4, and the 143-Ser-|-Lys-144 bond in IGFBP-5.. Metalloproteinase which specifically cleaves IGFBP-4 and IGFBP-5, resulting in release of bound IGF. Cleavage of IGFBP-4 is dramatically enhanced by the presence of IGF, whereas cleavage of IGFBP-5 is slightly inhibited by the presence of IGF. Isoform 2 cleaves IGFBP-4 very slowly compared to PAPP-A, but its ability to cleave IGFBP-5 is unaffected. This Mus musculus (Mouse) protein is Pappalysin-1 (Pappa).